Here is a 312-residue protein sequence, read N- to C-terminus: Pollen allergen Phl p 5.0101 (312 aa).

The first 25 residues, Met-1–Ala-25, serve as a signal peptide directing secretion.

This sequence belongs to the Poa p IX/Phl p VI allergen family.

It localises to the secreted. The polypeptide is Pollen allergen Phl p 5.0101 (Phleum pratense (Common timothy)).